The chain runs to 364 residues: Probable zinc transporter 10 (364 aa).

Residues 1 to 28 form the signal peptide; sequence MTKSHVIFSASIALFLLLSISHFPGALS. Residues 29–52 lie on the Extracellular side of the membrane; that stretch reads QSNKDCQSKSNYSCIDKNKALDLK. A helical membrane pass occupies residues 53–73; it reads LLSIFSILITSLIGVCLPFFA. Topologically, residues 74-85 are cytoplasmic; sequence RSIPAFQPEKSH. The helical transmembrane segment at 86–106 threads the bilayer; sequence FLIVKSFASGIILSTGFMHVL. Over 107–125 the chain is Extracellular; it reads PDSFEMLSSPCLNDNPWHK. Residues 126–146 form a helical membrane-spanning segment; that stretch reads FPFAGFVAMMSAVFTLMVDSI. At 147 to 209 the chain is on the cytoplasmic side; it reads TTSVFTKSGR…GSYLQLLRYR (63 aa). Residues 210–230 form a helical membrane-spanning segment; it reads ILAIVLELGIVVQSIVIGLSV. Residues 231–241 are Extracellular-facing; the sequence is GDTNNTCTIKG. The chain crosses the membrane as a helical span at residues 242-262; it reads LVAALCFHQMFEGMGLGGCIL. Topologically, residues 263–271 are cytoplasmic; sequence QAEYGWVKK. Residues 272 to 292 form a helical membrane-spanning segment; that stretch reads AVMAFFFAVTTPFGVVLGMAL. Residues 293–303 lie on the Extracellular side of the membrane; that stretch reads SKTYKENSPES. The helical transmembrane segment at 304–324 threads the bilayer; the sequence is LITVGLLNASSAGLLIYMALV. At 325–343 the chain is on the cytoplasmic side; sequence DLLAADFMGQKMQRSIKLQ. The chain crosses the membrane as a helical span at residues 344-364; that stretch reads LKSYAAVLLGAGGMSVMAKWA.

The protein belongs to the ZIP transporter (TC 2.A.5) family.

It localises to the cell membrane. Functionally, probably mediates zinc uptake from the rhizosphere. This Arabidopsis thaliana (Mouse-ear cress) protein is Probable zinc transporter 10 (ZIP10).